We begin with the raw amino-acid sequence, 165 residues long: Small ribosomal subunit protein eS10 (165 aa).

The disordered stretch occupies residues 92 to 165 (ATLRRSRPET…FGRGRGQAPQ (74 aa)). Basic and acidic residues predominate over residues 97-128 (SRPETGRPRPKGLEGERPPRLPRGETDRDTYR). A compositionally biased stretch (low complexity) spans 142–153 (AGAGAATEFQFR). Residues 154 to 165 (GGFGRGRGQAPQ) show a composition bias toward gly residues.

The protein belongs to the eukaryotic ribosomal protein eS10 family. Component of the small ribosomal subunit.

It localises to the cytoplasm. The protein resides in the nucleus. The protein localises to the nucleolus. Component of the 40S ribosomal subunit. The ribosome is a large ribonucleoprotein complex responsible for the synthesis of proteins in the cell. The polypeptide is Small ribosomal subunit protein eS10 (rps10) (Xenopus laevis (African clawed frog)).